A 308-amino-acid polypeptide reads, in one-letter code: UDP-N-acetylenolpyruvoylglucosamine reductase (308 aa).

The FAD-binding PCMH-type domain occupies Arg-35–Met-200. Residue Arg-180 is part of the active site. The span at Glu-211 to Thr-226 shows a compositional bias: basic and acidic residues. Residues Glu-211–Gly-236 are disordered. Ser-229 acts as the Proton donor in catalysis. Glu-299 is a catalytic residue.

Belongs to the MurB family. Requires FAD as cofactor.

The protein localises to the cytoplasm. It catalyses the reaction UDP-N-acetyl-alpha-D-muramate + NADP(+) = UDP-N-acetyl-3-O-(1-carboxyvinyl)-alpha-D-glucosamine + NADPH + H(+). It participates in cell wall biogenesis; peptidoglycan biosynthesis. Cell wall formation. This is UDP-N-acetylenolpyruvoylglucosamine reductase from Rhodopseudomonas palustris (strain BisB18).